Consider the following 793-residue polypeptide: Probable exo-1,4-beta-xylosidase xlnD (793 aa).

An N-terminal signal peptide occupies residues 1-20; the sequence is MPRVASVAAVLAALLPSALG. 3 N-linked (GlcNAc...) asparagine glycosylation sites follow: asparagine 23, asparagine 87, and asparagine 142. The active site involves aspartate 310. Asparagine 326, asparagine 385, asparagine 404, asparagine 440, asparagine 477, asparagine 518, asparagine 559, asparagine 614, asparagine 652, asparagine 679, and asparagine 701 each carry an N-linked (GlcNAc...) asparagine glycan.

This sequence belongs to the glycosyl hydrolase 3 family.

It is found in the secreted. The enzyme catalyses Hydrolysis of (1-&gt;4)-beta-D-xylans, to remove successive D-xylose residues from the non-reducing termini.. Its pathway is glycan degradation; xylan degradation. In terms of biological role, xylan 1,4-beta-xylosidase involved in the hydrolysis of xylan, a major structural heterogeneous polysaccharide found in plant biomass representing the second most abundant polysaccharide in the biosphere, after cellulose. This is Probable exo-1,4-beta-xylosidase xlnD (xlnD) from Aspergillus terreus (strain NIH 2624 / FGSC A1156).